Here is a 244-residue protein sequence, read N- to C-terminus: Uracil phosphoribosyltransferase (244 aa).

GTP contacts are provided by residues Lys-59, Arg-68, and 102–105 (YSKI). Position 112 (Arg-112) interacts with 5-phospho-alpha-D-ribose 1-diphosphate. Arg-129 contacts GTP. Arg-137 lines the 5-phospho-alpha-D-ribose 1-diphosphate pocket. Arg-158 provides a ligand contact to GTP. Residues Asp-164 and 164 to 172 (DPMCATAGS) contribute to the 5-phospho-alpha-D-ribose 1-diphosphate site. Uracil-binding positions include Ile-229 and 234–236 (GDF). 5-phospho-alpha-D-ribose 1-diphosphate is bound at residue Asp-235.

The protein belongs to the UPRTase family. As to quaternary structure, monomer. Forms homodimers in presence of substrates and homotetramers in the presence of GTP. The cofactor is Mg(2+).

It carries out the reaction UMP + diphosphate = 5-phospho-alpha-D-ribose 1-diphosphate + uracil. It participates in pyrimidine metabolism; UMP biosynthesis via salvage pathway; UMP from uracil: step 1/1. Its activity is regulated as follows. Allosterically activated by GTP. Binding of GTP leads to 5-time activation of the enzyme. Functionally, catalyzes the conversion of uracil and 5-phospho-alpha-D-ribose 1-diphosphate (PRPP) to UMP and diphosphate. The sequence is that of Uracil phosphoribosyltransferase (uprt) from Toxoplasma gondii.